We begin with the raw amino-acid sequence, 305 residues long: Taste receptor type 2 member 13 (305 aa).

At 1–7 (MGSNVYG) the chain is on the extracellular side. The chain crosses the membrane as a helical span at residues 8-28 (ILTMVMIAEFVFGNMSNGFIV). Residues 29-43 (LINCIDWVRKGTLSS) are Cytoplasmic-facing. A helical membrane pass occupies residues 44–64 (IGWILLFLAISRMVLIWEMLI). Over 65–88 (TWIKYMKYSFSFVTGTELRGIMFT) the chain is Extracellular. A helical membrane pass occupies residues 89–109 (WVISNHFSLWLATILSIFYLL). Topologically, residues 110–128 (KIASFSKPVFLYLKWREKK) are cytoplasmic. Residues 129–149 (VLLIVLLGNLIFLMLNILQIN) traverse the membrane as a helical segment. Residues 150–182 (KHIEHWMYQYERNITWSSRVSDFAGFSNLVLLE) are Extracellular-facing. N-linked (GlcNAc...) asparagine glycosylation is present at Asn162. The helical transmembrane segment at 183–203 (MIVFSVTPFTVALVSFILLIF) threads the bilayer. The Cytoplasmic segment spans residues 204–232 (SLWKHLQKMHLNSRGERDPSTKAHVNALR). A helical membrane pass occupies residues 233-253 (IMVSFLLLYATYFISFFLSLI). Residues 254-262 (PMAHKTRLG) lie on the Extracellular side of the membrane. The chain crosses the membrane as a helical span at residues 263–283 (LMFSITVGLFYPSSHSFILIL). At 284 to 305 (GHSNLRQASLWVMTYLKCGQKH) the chain is on the cytoplasmic side.

The protein belongs to the G-protein coupled receptor T2R family.

The protein resides in the cell membrane. Its function is as follows. Receptor that may play a role in the perception of bitterness and is gustducin-linked. May play a role in sensing the chemical composition of the gastrointestinal content. The activity of this receptor may stimulate alpha gustducin, mediate PLC-beta-2 activation and lead to the gating of TRPM5. This is Taste receptor type 2 member 13 from Mus musculus (Mouse).